A 91-amino-acid chain; its full sequence is Small ribosomal subunit protein uS15 (91 aa).

It belongs to the universal ribosomal protein uS15 family. Part of the 30S ribosomal subunit. Forms a bridge to the 50S subunit in the 70S ribosome, contacting the 23S rRNA.

Its function is as follows. One of the primary rRNA binding proteins, it binds directly to 16S rRNA where it helps nucleate assembly of the platform of the 30S subunit by binding and bridging several RNA helices of the 16S rRNA. Forms an intersubunit bridge (bridge B4) with the 23S rRNA of the 50S subunit in the ribosome. The sequence is that of Small ribosomal subunit protein uS15 from Cytophaga hutchinsonii (strain ATCC 33406 / DSM 1761 / CIP 103989 / NBRC 15051 / NCIMB 9469 / D465).